A 499-amino-acid chain; its full sequence is Aspartyl/glutamyl-tRNA(Asn/Gln) amidotransferase subunit B (499 aa).

This sequence belongs to the GatB/GatE family. GatB subfamily. Heterotrimer of A, B and C subunits.

The catalysed reaction is L-glutamyl-tRNA(Gln) + L-glutamine + ATP + H2O = L-glutaminyl-tRNA(Gln) + L-glutamate + ADP + phosphate + H(+). It carries out the reaction L-aspartyl-tRNA(Asn) + L-glutamine + ATP + H2O = L-asparaginyl-tRNA(Asn) + L-glutamate + ADP + phosphate + 2 H(+). Allows the formation of correctly charged Asn-tRNA(Asn) or Gln-tRNA(Gln) through the transamidation of misacylated Asp-tRNA(Asn) or Glu-tRNA(Gln) in organisms which lack either or both of asparaginyl-tRNA or glutaminyl-tRNA synthetases. The reaction takes place in the presence of glutamine and ATP through an activated phospho-Asp-tRNA(Asn) or phospho-Glu-tRNA(Gln). The protein is Aspartyl/glutamyl-tRNA(Asn/Gln) amidotransferase subunit B of Bartonella bacilliformis (strain ATCC 35685 / KC583 / Herrer 020/F12,63).